Reading from the N-terminus, the 472-residue chain is Velvet complex subunit umv2 (472 aa).

4 stretches are compositionally biased toward basic and acidic residues: residues 1–10 (MSRSDTDGRD), 29–59 (SQRR…DSHG), 67–80 (YSRD…HRGD), and 89–105 (SYQR…EQER). Disordered stretches follow at residues 1 to 121 (MSRS…PLEA), 281 to 327 (CDDG…QFGG), and 433 to 472 (SQGI…EDDE). A compositionally biased stretch (low complexity) spans 106-116 (SYGGASASRSS). The Velvet domain maps to 158 to 441 (ENGRRYRLVV…ASQGIKIPVR (284 aa)). Residues 286-298 (RSSTHPQHASEST) are compositionally biased toward polar residues. Over residues 456-466 (DGMGDYDGASG) the composition is skewed to gly residues.

This sequence belongs to the velvet family. VelB subfamily. In terms of assembly, component of the heterotrimeric velvet complex composed of laeA, veA and velB; VeA acting as a bridging protein between laeA and velB. Forms a heterodimeric complex with vosA; the formation of the velB-vosA complex is light-dependent.

The protein localises to the nucleus. It is found in the cytoplasm. Functionally, component of the velvet transcription factor complex that controls sexual/asexual developmental ratio in response to light, promoting sexual development in the darkness while stimulating asexual sporulation under illumination. The velvet complex acts as a global regulator for secondary metabolite gene expression. Component of the velB-VosA heterodimeric complex that plays a dual role in activating genes associated with spore maturation and repressing certain development-associated genes. The velB-VosA complex binds DNA through the DNA-binding domain of vosA that recognizes an 11-nucleotide consensus sequence 5'-CTGGCCGCGGC-3' consisting of two motifs in the promoters of key developmental regulatory genes. Required for full virulence on seedlings. This Mycosarcoma maydis (Corn smut fungus) protein is Velvet complex subunit umv2.